Reading from the N-terminus, the 424-residue chain is Histidinol dehydrogenase (424 aa).

Tyrosine 121, glutamine 183, and asparagine 206 together coordinate NAD(+). 3 residues coordinate substrate: serine 229, glutamine 251, and histidine 254. Residues glutamine 251 and histidine 254 each contribute to the Zn(2+) site. Residues glutamate 319 and histidine 320 each act as proton acceptor in the active site. Residues histidine 320, aspartate 353, glutamate 407, and histidine 412 each coordinate substrate. Zn(2+) is bound at residue aspartate 353. Histidine 412 serves as a coordination point for Zn(2+).

It belongs to the histidinol dehydrogenase family. Zn(2+) serves as cofactor.

The enzyme catalyses L-histidinol + 2 NAD(+) + H2O = L-histidine + 2 NADH + 3 H(+). It functions in the pathway amino-acid biosynthesis; L-histidine biosynthesis; L-histidine from 5-phospho-alpha-D-ribose 1-diphosphate: step 9/9. Functionally, catalyzes the sequential NAD-dependent oxidations of L-histidinol to L-histidinaldehyde and then to L-histidine. This is Histidinol dehydrogenase from Halalkalibacterium halodurans (strain ATCC BAA-125 / DSM 18197 / FERM 7344 / JCM 9153 / C-125) (Bacillus halodurans).